We begin with the raw amino-acid sequence, 208 residues long: Mediator of RNA polymerase II transcription subunit 18 (208 aa).

Ser66 carries the phosphoserine modification.

It belongs to the Mediator complex subunit 18 family. Component of the Mediator complex, which is composed of MED1, MED4, MED6, MED7, MED8, MED9, MED10, MED11, MED12, MED13, MED13L, MED14, MED15, MED16, MED17, MED18, MED19, MED20, MED21, MED22, MED23, MED24, MED25, MED26, MED27, MED29, MED30, MED31, CCNC, CDK8 and CDC2L6/CDK11. The MED12, MED13, CCNC and CDK8 subunits form a distinct module termed the CDK8 module. Mediator containing the CDK8 module is less active than Mediator lacking this module in supporting transcriptional activation. Individual preparations of the Mediator complex lacking one or more distinct subunits have been variously termed ARC, CRSP, DRIP, PC2, SMCC and TRAP.

It localises to the nucleus. Functionally, component of the Mediator complex, a coactivator involved in the regulated transcription of nearly all RNA polymerase II-dependent genes. Mediator functions as a bridge to convey information from gene-specific regulatory proteins to the basal RNA polymerase II transcription machinery. Mediator is recruited to promoters by direct interactions with regulatory proteins and serves as a scaffold for the assembly of a functional preinitiation complex with RNA polymerase II and the general transcription factors. This is Mediator of RNA polymerase II transcription subunit 18 (MED18) from Homo sapiens (Human).